The chain runs to 458 residues: Ammonium transporter Rh type B (458 aa).

Residues 1-13 (MAGSSRRAGGRRL) are Cytoplasmic-facing. The chain crosses the membrane as a helical span at residues 14–34 (QLPLLCLLLQGATAILFAVFV). Topologically, residues 35 to 61 (RYNHETDAALWHWGNHSNPDNEFYFRY) are extracellular. An N-linked (GlcNAc...) asparagine glycan is attached at asparagine 49. A helical membrane pass occupies residues 62–82 (PSFQDVHTMIFVGFGFLMAFL). Topologically, residues 83-86 (QRYG) are cytoplasmic. A helical transmembrane segment spans residues 87-107 (FSSVGFTFLLAAFALQWSTLV). Residues 108–124 (QGFLHTFHGGHIHIGVE) are Extracellular-facing. The chain crosses the membrane as a helical span at residues 125 to 145 (SMINADFCAGAVLISFGAILG). Topologically, residues 146–149 (KTGP) are cytoplasmic. A helical membrane pass occupies residues 150 to 170 (AQLLLMALLEVVLFGLNEFVL). Over 171–178 (LSLLGVKD) the chain is Extracellular. A helical membrane pass occupies residues 179 to 201 (AGGSMTIHTFGAYFGLVLSRVLY). Residues 202 to 219 (RPQLEKSKHRQSSVYHSD) are Cytoplasmic-facing. A helical membrane pass occupies residues 220–240 (LFAMIGTIFLWIFWPSFNSAP). Residues 241–251 (TPLGDGQHRTA) lie on the Extracellular side of the membrane. A helical transmembrane segment spans residues 252-272 (LNTYYSLTASTLSTFALSALV). Topologically, residues 273 to 282 (GRDGRLDMVH) are cytoplasmic. The helical transmembrane segment at 283–303 (VQNAALAGGVVVGTSAEMMLT) threads the bilayer. A topological domain (extracellular) is located at residue proline 304. Residues 305 to 325 (FGALAAGFLAGTVSTLGFKFF) form a helical membrane-spanning segment. Residues 326–346 (TPILESKFKIQDTCGVHNLHG) are Cytoplasmic-facing. A helical membrane pass occupies residues 347 to 367 (MPGVLGALLGVLVAGLATHDS). Topologically, residues 368–393 (YGEGLESVFPLIAEGQRSSTSQALHQ) are extracellular. Residues 394–414 (LFGLFVTLIFASVGGGLGGLL) traverse the membrane as a helical segment. At 415 to 458 (LRLPFLDSPPDSQCYEDQIYWEVPEEHADLAQGSLRPEEPDTQA) the chain is on the cytoplasmic side. Positions 416–424 (RLPFLDSPP) are interaction with ANK3. The short motif at 429-432 (YEDQ) is the Basolateral sorting signal element.

The protein belongs to the ammonium transporter (TC 2.A.49) family. Rh subfamily. Interacts (via C-terminus) with ANK2 and ANK3; required for targeting to the basolateral membrane. Post-translationally, N-glycosylated.

Its subcellular location is the cell membrane. It is found in the basolateral cell membrane. The enzyme catalyses NH4(+)(in) = NH4(+)(out). It carries out the reaction methylamine(out) = methylamine(in). It catalyses the reaction CO2(out) = CO2(in). In terms of biological role, ammonium transporter involved in the maintenance of acid-base homeostasis. Transports ammonium and its related derivative methylammonium across the basolateral plasma membrane of epithelial cells likely contributing to renal transepithelial ammonia transport and ammonia metabolism. May transport either NH4(+) or NH3 ammonia species predominantly mediating an electrogenic NH4(+) transport. May act as a CO2 channel providing for renal acid secretion. The chain is Ammonium transporter Rh type B (RHBG) from Sus scrofa (Pig).